Consider the following 323-residue polypeptide: Glutathione synthetase (323 aa).

An ATP-grasp domain is found at 133 to 317; sequence KMYALQFQSV…IGDQTIAALE (185 aa). 159 to 215 serves as a coordination point for ATP; sequence LDELRAAVLKPLGGKAGEGILFLDPGDRNFNSLVEISTQQGQLPVMVQQYLPEAKDG. Positions 288 and 290 each coordinate Mg(2+).

The protein belongs to the prokaryotic GSH synthase family. The cofactor is Mg(2+). Mn(2+) is required as a cofactor.

It carries out the reaction gamma-L-glutamyl-L-cysteine + glycine + ATP = glutathione + ADP + phosphate + H(+). Its pathway is sulfur metabolism; glutathione biosynthesis; glutathione from L-cysteine and L-glutamate: step 2/2. The protein is Glutathione synthetase of Synechococcus elongatus (strain ATCC 33912 / PCC 7942 / FACHB-805) (Anacystis nidulans R2).